Consider the following 214-residue polypeptide: Dual specificity phosphatase 29 (214 aa).

One can recognise a Tyrosine-protein phosphatase domain in the interval 46–194; the sequence is HVNEVWPNLY…LRELDIELAL (149 aa). Residue 138 to 145 participates in substrate binding; that stretch reads HCAMGRSR. The active-site Phosphocysteine intermediate is Cys-139.

The protein belongs to the protein-tyrosine phosphatase family. Non-receptor class dual specificity subfamily.

Its subcellular location is the cytoplasm. It localises to the nucleus. It carries out the reaction O-phospho-L-tyrosyl-[protein] + H2O = L-tyrosyl-[protein] + phosphate. The enzyme catalyses O-phospho-L-seryl-[protein] + H2O = L-seryl-[protein] + phosphate. It catalyses the reaction O-phospho-L-threonyl-[protein] + H2O = L-threonyl-[protein] + phosphate. Functionally, dual specificity phosphatase able to dephosphorylate phosphotyrosine, phosphoserine and phosphothreonine residues within the same substrate, with a preference for phosphotyrosine as a substrate. Involved in the modulation of AMPK and MAPK1/2 signaling pathways. The chain is Dual specificity phosphatase 29 (DUSP29) from Gallus gallus (Chicken).